The sequence spans 836 residues: Glutamate receptor ionotropic, kainate 1 (836 aa).

The signal sequence occupies residues Met-1–Pro-30. The Extracellular segment spans residues Gln-31 to Pro-561. N-linked (GlcNAc...) asparagine glycans are attached at residues Asn-68, Asn-74, Asn-276, Asn-379, Asn-413, Asn-424, and Asn-431. L-glutamate-binding residues include Pro-516, Thr-518, and Arg-523. Asn-546 is a glycosylation site (N-linked (GlcNAc...) asparagine). Residues Asp-562–Ala-582 traverse the membrane as a helical segment. Topologically, residues Arg-583–Gly-638 are cytoplasmic. The helical transmembrane segment at Ile-639–Leu-659 threads the bilayer. Topologically, residues Thr-660–Asn-721 are extracellular. 2 residues coordinate L-glutamate: Ser-689 and Thr-690. Residues Ile-722–Gly-742 form a helical membrane-spanning segment. The Cytoplasmic portion of the chain corresponds to Glu-743–Ala-836.

The protein belongs to the glutamate-gated ion channel (TC 1.A.10.1) family. GRIK1 subfamily. In terms of assembly, homotetramer or heterotetramer of pore-forming glutamate receptor subunits. Tetramers may be formed by the dimerization of dimers. Can form functional heteromeric receptors with GRIK4 and GRIK5. Interacts with KLHL17. Most abundant in the cerebellum. Also present in the suprachiasmatic nuclei of the hypothalamus.

It localises to the cell membrane. Its subcellular location is the postsynaptic cell membrane. The enzyme catalyses Ca(2+)(in) = Ca(2+)(out). In terms of biological role, ionotropic glutamate receptor that functions as a cation-permeable ligand-gated ion channel, gated by L-glutamate and the glutamatergic agonist kainic acid. L-glutamate acts as an excitatory neurotransmitter at many synapses in the central nervous system. Binding of the excitatory neurotransmitter L-glutamate induces a conformation change, leading to the opening of the cation channel, and thereby converts the chemical signal to an electrical impulse. The receptor then desensitizes rapidly and enters a transient inactive state, characterized by the presence of bound agonist. The chain is Glutamate receptor ionotropic, kainate 1 (Grik1) from Mus musculus (Mouse).